Consider the following 88-residue polypeptide: Small ribosomal subunit protein bS16c (88 aa).

The protein belongs to the bacterial ribosomal protein bS16 family.

The protein resides in the plastid. Its subcellular location is the chloroplast. This chain is Small ribosomal subunit protein bS16c, found in Gossypium hirsutum (Upland cotton).